Here is a 180-residue protein sequence, read N- to C-terminus: NADH-quinone oxidoreductase subunit I (180 aa).

4Fe-4S ferredoxin-type domains lie at 44–74 (LNRYPDGLEKCIGCELCAWACPADAIYVEGA) and 90–119 (RVYQINYLRCIGCGLCIEACPTRALTMTTE). [4Fe-4S] cluster contacts are provided by C54, C57, C60, C64, C99, C102, C105, and C109. A disordered region spans residues 145-180 (MQAPPHDMAPGKTDDDYYLGNVTPITPVPSGTEDAR).

This sequence belongs to the complex I 23 kDa subunit family. As to quaternary structure, NDH-1 is composed of 14 different subunits. Subunits NuoA, H, J, K, L, M, N constitute the membrane sector of the complex. Requires [4Fe-4S] cluster as cofactor.

The protein localises to the cell membrane. It carries out the reaction a quinone + NADH + 5 H(+)(in) = a quinol + NAD(+) + 4 H(+)(out). Its function is as follows. NDH-1 shuttles electrons from NADH, via FMN and iron-sulfur (Fe-S) centers, to quinones in the respiratory chain. The immediate electron acceptor for the enzyme in this species is believed to be menaquinone. Couples the redox reaction to proton translocation (for every two electrons transferred, four hydrogen ions are translocated across the cytoplasmic membrane), and thus conserves the redox energy in a proton gradient. The chain is NADH-quinone oxidoreductase subunit I from Mycolicibacterium smegmatis (strain ATCC 700084 / mc(2)155) (Mycobacterium smegmatis).